Here is a 223-residue protein sequence, read N- to C-terminus: Phosphoribosylformylglycinamidine synthase subunit PurQ (223 aa).

The Glutamine amidotransferase type-1 domain maps to 3–223 (FAVLVFPGSN…MVKSWREQNV (221 aa)). Cysteine 85 functions as the Nucleophile in the catalytic mechanism. Residues histidine 193 and glutamate 195 contribute to the active site.

In terms of assembly, part of the FGAM synthase complex composed of 1 PurL, 1 PurQ and 2 PurS subunits.

The protein localises to the cytoplasm. It carries out the reaction N(2)-formyl-N(1)-(5-phospho-beta-D-ribosyl)glycinamide + L-glutamine + ATP + H2O = 2-formamido-N(1)-(5-O-phospho-beta-D-ribosyl)acetamidine + L-glutamate + ADP + phosphate + H(+). It catalyses the reaction L-glutamine + H2O = L-glutamate + NH4(+). Its pathway is purine metabolism; IMP biosynthesis via de novo pathway; 5-amino-1-(5-phospho-D-ribosyl)imidazole from N(2)-formyl-N(1)-(5-phospho-D-ribosyl)glycinamide: step 1/2. Part of the phosphoribosylformylglycinamidine synthase complex involved in the purines biosynthetic pathway. Catalyzes the ATP-dependent conversion of formylglycinamide ribonucleotide (FGAR) and glutamine to yield formylglycinamidine ribonucleotide (FGAM) and glutamate. The FGAM synthase complex is composed of three subunits. PurQ produces an ammonia molecule by converting glutamine to glutamate. PurL transfers the ammonia molecule to FGAR to form FGAM in an ATP-dependent manner. PurS interacts with PurQ and PurL and is thought to assist in the transfer of the ammonia molecule from PurQ to PurL. This is Phosphoribosylformylglycinamidine synthase subunit PurQ from Staphylococcus epidermidis (strain ATCC 35984 / DSM 28319 / BCRC 17069 / CCUG 31568 / BM 3577 / RP62A).